The following is a 365-amino-acid chain: tRNA 2-selenouridine synthase (365 aa).

One can recognise a Rhodanese domain in the interval 15 to 138 (FIAGQPLIDL…MRQYLIGVIE (124 aa)). The active-site S-selanylcysteine intermediate is Cys-98.

The protein belongs to the SelU family. As to quaternary structure, monomer.

The catalysed reaction is 5-methylaminomethyl-2-thiouridine(34) in tRNA + selenophosphate + (2E)-geranyl diphosphate + H2O + H(+) = 5-methylaminomethyl-2-selenouridine(34) in tRNA + (2E)-thiogeraniol + phosphate + diphosphate. It carries out the reaction 5-methylaminomethyl-2-thiouridine(34) in tRNA + (2E)-geranyl diphosphate = 5-methylaminomethyl-S-(2E)-geranyl-thiouridine(34) in tRNA + diphosphate. It catalyses the reaction 5-methylaminomethyl-S-(2E)-geranyl-thiouridine(34) in tRNA + selenophosphate + H(+) = 5-methylaminomethyl-2-(Se-phospho)selenouridine(34) in tRNA + (2E)-thiogeraniol. The enzyme catalyses 5-methylaminomethyl-2-(Se-phospho)selenouridine(34) in tRNA + H2O = 5-methylaminomethyl-2-selenouridine(34) in tRNA + phosphate. Functionally, involved in the post-transcriptional modification of the uridine at the wobble position (U34) of tRNA(Lys), tRNA(Glu) and tRNA(Gln). Catalyzes the conversion of 2-thiouridine (S2U-RNA) to 2-selenouridine (Se2U-RNA). Acts in a two-step process involving geranylation of 2-thiouridine (S2U) to S-geranyl-2-thiouridine (geS2U) and subsequent selenation of the latter derivative to 2-selenouridine (Se2U) in the tRNA chain. This is tRNA 2-selenouridine synthase from Shewanella sp. (strain ANA-3).